Reading from the N-terminus, the 202-residue chain is Homeobox protein ceh-13 (202 aa).

Disordered stretches follow at residues 60 to 83 and 166 to 202; these read PATA…LPTG and RMKE…KNFK. Residues 63-81 are compositionally biased toward low complexity; the sequence is ASGLSPPASRSSNSSAELP. The homeobox DNA-binding region spans 114 to 173; sequence NGTNRTNFTTHQLTELEKEFHTAKYVNRTRRTEIASNLKLQEAQVKIWFQNRRMKEKKRE. A compositionally biased stretch (polar residues) spans 183 to 194; sequence TWESNSPTSSCS.

It localises to the nucleus. The polypeptide is Homeobox protein ceh-13 (ceh-13) (Caenorhabditis elegans).